A 168-amino-acid polypeptide reads, in one-letter code: Cofilin-1-B (168 aa).

Position 2 is an N-acetylalanine (alanine 2). The ADF-H domain maps to 4 to 153 (GVMVSDDVVK…NDPCNLADKL (150 aa)). A Nuclear localization signal motif is present at residues 30–34 (KKRKK).

This sequence belongs to the actin-binding proteins ADF family. In terms of processing, inactive when phosphorylated. Phosphorylation levels vary during development. Oocytes contain only the phosphorylated form, and 80-95% of cfl1 protein is phosphorylated in unfertilized eggs. Rapid dephosphorylation occurs within 30 minutes after fertilization. Phosphorylation levels increase again between the morula and blastula stages (5-8 hpf) and then decrease again as gastrulation approaches. Dephosphorylated by pdxp. As to expression, expressed diffusely in both animal and vegetal hemispheres of the oocyte. During cleavage, expression accumulates around the cleavage furrow, along the vegetal membrane, and later in the midbody. Strongly expressed in the animal hemisphere during blastula stages, with most cells showing expression by gastrulation. By stage 17, expression is highest in cells of the developing neuroectoderm, and at stage 24 the notochord, neural tube, neural crest, somites and some cells of the archenteron show high expression. By stage 35, expression has declined in the notochord, but remains in the neural tube, epidermis and a layer of cells in the archenteron. Also highly expressed in the retina and neuronal cell bodies at the base of the cement gland but not the cement gland itself. At stage 38, expression is widespread, being highest in the nervous system and retina. In the adult, expression is high in the brain, heart, oocyte, stomach, and low in skeletal muscle.

It localises to the nucleus matrix. It is found in the cytoplasm. The protein resides in the cytoskeleton. Its subcellular location is the cell cortex. The protein localises to the membrane. May play a role in the regulation of cell morphology and cytoskeletal organization. Binds to F-actin and exhibits pH-sensitive F-actin depolymerizing activity. Required for formation of the cleavage furrow during cytokinesis. The chain is Cofilin-1-B (cfl1-b) from Xenopus laevis (African clawed frog).